Here is a 61-residue protein sequence, read N- to C-terminus: Large ribosomal subunit protein bL28 (61 aa).

Positions 1-26 (MAKDFINGKRTQFGNKRSHALNSSRR) are disordered. Residues 9-25 (KRTQFGNKRSHALNSSR) show a composition bias toward polar residues.

The protein belongs to the bacterial ribosomal protein bL28 family.

In Limosilactobacillus reuteri (strain DSM 20016) (Lactobacillus reuteri), this protein is Large ribosomal subunit protein bL28.